The following is a 199-amino-acid chain: 3-isopropylmalate dehydratase small subunit (199 aa).

It belongs to the LeuD family. LeuD type 1 subfamily. Heterodimer of LeuC and LeuD.

It carries out the reaction (2R,3S)-3-isopropylmalate = (2S)-2-isopropylmalate. The protein operates within amino-acid biosynthesis; L-leucine biosynthesis; L-leucine from 3-methyl-2-oxobutanoate: step 2/4. Catalyzes the isomerization between 2-isopropylmalate and 3-isopropylmalate, via the formation of 2-isopropylmaleate. The polypeptide is 3-isopropylmalate dehydratase small subunit (Kocuria rhizophila (strain ATCC 9341 / DSM 348 / NBRC 103217 / DC2201)).